The primary structure comprises 1170 residues: Thrombospondin-1 (1170 aa).

Positions 1 to 18 (MELLRGLGVLFLLHMCGS) are cleaved as a signal peptide. Residues 47–95 (RLVKGQDLSSPAFRIENANLIPAVPDDKFQDLLDAVWADKGFIFLASLR) are heparin-binding. Positions 56–270 (SPAFRIENAN…HKTKDLQAIC (215 aa)) constitute a Laminin G-like domain. A disulfide bridge connects residues cysteine 171 and cysteine 232. N-linked (GlcNAc...) asparagine glycosylation is found at asparagine 248 and asparagine 360. In terms of domain architecture, VWFC spans 316–373 (PLCFHNGVQYKNNEEWTVDSCTECHCQNSVTICKKVSCPIMPCSNATVPDGECCPRCW). TSP type-1 domains are found at residues 379 to 429 (DDGW…QECD), 435 to 490 (DGGW…DACP), and 492 to 547 (NGGW…QDCP). The C-linked (Man) tryptophan glycan is linked to tryptophan 385. 3 disulfide bridges follow: cysteine 391-cysteine 423, cysteine 395-cysteine 428, and cysteine 406-cysteine 413. C-linked (Man) tryptophan glycans are attached at residues tryptophan 438 and tryptophan 441. Cystine bridges form between cysteine 447–cysteine 484, cysteine 451–cysteine 489, and cysteine 462–cysteine 474. O-linked (Fuc...) threonine glycosylation is present at threonine 450. A C-linked (Man) tryptophan glycan is attached at tryptophan 498. Cystine bridges form between cysteine 504-cysteine 541, cysteine 508-cysteine 546, cysteine 519-cysteine 531, cysteine 551-cysteine 562, cysteine 556-cysteine 572, cysteine 575-cysteine 586, cysteine 592-cysteine 608, cysteine 599-cysteine 617, cysteine 620-cysteine 644, cysteine 650-cysteine 663, cysteine 657-cysteine 676, cysteine 678-cysteine 689, cysteine 705-cysteine 713, cysteine 718-cysteine 738, cysteine 754-cysteine 774, cysteine 777-cysteine 797, cysteine 813-cysteine 833, cysteine 836-cysteine 856, cysteine 874-cysteine 894, cysteine 910-cysteine 930, and cysteine 946-cysteine 1167. Threonine 507 is a glycosylation site (O-linked (Fuc...) threonine). Positions 531 to 1152 (CVGDVTENQV…YAGGRLGLFV (622 aa)) are involved in retention in extracellular matrix (ECM); involved in trimer formation. Residues 547–587 (PIDGCLSNPCFAGAKCTSYPDGSWKCGACPPGYSGNGIQCK) enclose the EGF-like 1 domain. The O-linked (Xyl) serine glycan is linked to serine 553. The EGF-like 2 domain occupies 646–690 (PRNPCTDGTHDCNKNAKCNYLGHYSDPMYRCECKPGYAGNGIICG). 8 TSP type-3 repeats span residues 691 to 726 (EDTDLDGWPNENLVCVANATYHCKKDNCPNLPNSGQ), 727 to 762 (EDYDKDGIGDACDDDDDNDKIPDDRDNCPFHYNPAQ), 763 to 785 (YDYDRDDVGDRCDNCPYNHNPDQ), 786 to 821 (ADTDKNGEGDACAVDIDGDGILNERDNCQYVYNVDQ), 822 to 844 (RDTDMDGVGDQCDNCPLEHNPDQ), 845 to 882 (LDSDSDLIGDTCDNNQDIDEDGHQNNLDNCPYVPNANQ), 883 to 918 (ADHDKDGKGDACDHDDDNDGIPDDRDNCRLVPNPDQ), and 919 to 954 (KDSDGDGRGDACKDDFDHDNVPDIDDICPENFDISE). Residue asparagine 708 is glycosylated (N-linked (GlcNAc...) asparagine). The segment at 840–934 (HNPDQLDSDS…GRGDACKDDF (95 aa)) is disordered. Basic and acidic residues-rich tracts occupy residues 883 to 894 (ADHDKDGKGDAC) and 917 to 934 (DQKDSDGDGRGDACKDDF). The short motif at 926 to 928 (RGD) is the Cell attachment site element. One can recognise a TSP C-terminal domain in the interval 958-1170 (RRFQMIPLDP…SDMKYECRDS (213 aa)). An N-linked (GlcNAc...) asparagine glycan is attached at asparagine 1067.

Belongs to the thrombospondin family. In terms of assembly, homotrimer; disulfide-linked. Can bind to fibrinogen, fibronectin, laminin, type V collagen and integrins alpha-V/beta-1, alpha-V/beta-3 and alpha-IIb/beta-3. Binds heparin. Interacts (via the C-terminal domain) with CD47. Interacts (via the TSP type I repeats) with CD36; the interaction conveys an antiangiogenic effect. Interacts (via the TSP type I repeats) with HRG; the interaction blocks the antiangiogenic effect of THBS1 with CD36. Interacts with ATF6 (via lumenal domain). Interacts with FN1; this interaction is enhanced by TNFAIP6, which may act as a bridging molecule between FN1 and THBS1. Interacts with SIRPA; the interaction stimulates phosphorylation of SIRPA.

It localises to the secreted. The protein localises to the cell surface. Its subcellular location is the extracellular space. The protein resides in the extracellular matrix. It is found in the endoplasmic reticulum. It localises to the sarcoplasmic reticulum. Functionally, adhesive glycoprotein that mediates cell-to-cell and cell-to-matrix interactions. Multifunctional, involved in inflammation, angiogenesis, wound healing, reactive oxygen species (ROS) signaling, nitrous oxide (NO) signaling, apoptosis, senescence, aging, cellular self-renewal, stemness, and cardiovascular and metabolic homeostasis. Negatively modulates dendritic cell activation and cytokine release, as part of an autocrine feedback loop, contributing to the resolution of inflammation and immune homeostasis. Ligand for receptor CD47. Modulates nitrous oxide (NO) signaling via CD47, hence playing a role as a pressor agent, supporting blood pressure. Plays a role in endothelial cell senescence, acting via CD47, by increasing the abundance and activation of NADPH oxidase NOX1, and so generating excess ROS. Inhibits stem cell self-renewal, acting via CD47 signaling, probably by regulation of the stem cell transcription factors POU5F1/OCT4, SOX2, MYC/c-Myc and KLF4. Negatively modulates wound healing, acting via CD47. Ligand for receptor CD36. Involved in inducing apoptosis in podocytes in response to elevated free fatty acids, acting via CD36. Plays a role in suppressing angiogenesis, acting, depending on context, via CD36 or CD47. Promotes cellular senescence in a TP53-CDKN1A-RB1 signaling-dependent manner. Ligand for immunoglobulin-like cell surface receptor SIRPA. Involved in ROS signaling in non-phagocytic cells, stimulating NADPH oxidase-derived ROS production, acting via interaction with SIRPA. Plays a role in metabolic dysfunction in diet-induced obesity, perhaps acting by exacerbating adipose inflammatory activity; its effects may be mediated, at least in part, through enhanced adipocyte proliferation. Plays a role in ER stress response, via its interaction with the activating transcription factor 6 alpha (ATF6) which produces adaptive ER stress response factors. May be involved in age-related conditions, including metabolic dysregulation, during normal aging. This Mus musculus (Mouse) protein is Thrombospondin-1 (Thbs1).